The following is a 121-amino-acid chain: Large ribosomal subunit protein bL19 (121 aa).

The protein belongs to the bacterial ribosomal protein bL19 family.

Functionally, this protein is located at the 30S-50S ribosomal subunit interface and may play a role in the structure and function of the aminoacyl-tRNA binding site. The sequence is that of Large ribosomal subunit protein bL19 from Chlamydia trachomatis serovar L2 (strain ATCC VR-902B / DSM 19102 / 434/Bu).